The chain runs to 140 residues: Large ribosomal subunit protein uL11 (140 aa).

This sequence belongs to the universal ribosomal protein uL11 family. As to quaternary structure, part of the ribosomal stalk of the 50S ribosomal subunit. Interacts with L10 and the large rRNA to form the base of the stalk. L10 forms an elongated spine to which L12 dimers bind in a sequential fashion forming a multimeric L10(L12)X complex. Post-translationally, one or more lysine residues are methylated.

Forms part of the ribosomal stalk which helps the ribosome interact with GTP-bound translation factors. The polypeptide is Large ribosomal subunit protein uL11 (Thermoanaerobacter pseudethanolicus (strain ATCC 33223 / 39E) (Clostridium thermohydrosulfuricum)).